A 158-amino-acid polypeptide reads, in one-letter code: MLRQLLATARRLLLPLATPKRCLSSKPNGLDKSEYSTPPEVIDYEDPEGLPVPEYPVRPDEPLATRKQRLLYQSRKRGMLENDLLLSTFVAKYLKDFDEDETALYDKLINGVSNDWDIYYWATETKPTPPEYDTDIMKLLKQHVKNTERVQRIRQPDL.

Residues 1 to 23 (MLRQLLATARRLLLPLATPKRCL) constitute a mitochondrion transit peptide.

It belongs to the SDHAF2 family. In terms of assembly, interacts with the flavoprotein subunit within the SDH catalytic dimer.

It localises to the mitochondrion matrix. Its function is as follows. Plays an essential role in the assembly of succinate dehydrogenase (SDH), an enzyme complex (also referred to as respiratory complex II) that is a component of both the tricarboxylic acid (TCA) cycle and the mitochondrial electron transport chain, and which couples the oxidation of succinate to fumarate with the reduction of ubiquinone (coenzyme Q) to ubiquinol. Required for flavinylation (covalent attachment of FAD) of the flavoprotein subunit of the SDH catalytic dimer. The protein is Succinate dehydrogenase assembly factor 2, mitochondrial of Drosophila virilis (Fruit fly).